Here is a 295-residue protein sequence, read N- to C-terminus: 4-hydroxy-tetrahydrodipicolinate synthase (295 aa).

T46 lines the pyruvate pocket. The active-site Proton donor/acceptor is Y134. The Schiff-base intermediate with substrate role is filled by K162. I205 contributes to the pyruvate binding site.

Belongs to the DapA family. Homotetramer; dimer of dimers.

Its subcellular location is the cytoplasm. The catalysed reaction is L-aspartate 4-semialdehyde + pyruvate = (2S,4S)-4-hydroxy-2,3,4,5-tetrahydrodipicolinate + H2O + H(+). It functions in the pathway amino-acid biosynthesis; L-lysine biosynthesis via DAP pathway; (S)-tetrahydrodipicolinate from L-aspartate: step 3/4. Its function is as follows. Catalyzes the condensation of (S)-aspartate-beta-semialdehyde [(S)-ASA] and pyruvate to 4-hydroxy-tetrahydrodipicolinate (HTPA). This is 4-hydroxy-tetrahydrodipicolinate synthase from Anaeromyxobacter sp. (strain K).